Here is a 108-residue protein sequence, read N- to C-terminus: UPF0060 membrane protein RHOS4_03690 (108 aa).

4 consecutive transmembrane segments (helical) span residues Leu5–Trp25, Ala32–Thr52, Ala62–Val82, and Arg86–Pro106.

It belongs to the UPF0060 family.

Its subcellular location is the cell inner membrane. This is UPF0060 membrane protein RHOS4_03690 from Cereibacter sphaeroides (strain ATCC 17023 / DSM 158 / JCM 6121 / CCUG 31486 / LMG 2827 / NBRC 12203 / NCIMB 8253 / ATH 2.4.1.) (Rhodobacter sphaeroides).